The sequence spans 380 residues: Lipid-A-disaccharide synthase (380 aa).

This sequence belongs to the LpxB family.

It catalyses the reaction a lipid X + a UDP-2-N,3-O-bis[(3R)-3-hydroxyacyl]-alpha-D-glucosamine = a lipid A disaccharide + UDP + H(+). It functions in the pathway bacterial outer membrane biogenesis; LPS lipid A biosynthesis. Its function is as follows. Condensation of UDP-2,3-diacylglucosamine and 2,3-diacylglucosamine-1-phosphate to form lipid A disaccharide, a precursor of lipid A, a phosphorylated glycolipid that anchors the lipopolysaccharide to the outer membrane of the cell. The chain is Lipid-A-disaccharide synthase from Rickettsia typhi (strain ATCC VR-144 / Wilmington).